We begin with the raw amino-acid sequence, 259 residues long: Ribonuclease HII (259 aa).

Positions threonine 70–glutamate 258 constitute an RNase H type-2 domain. The a divalent metal cation site is built by aspartate 76, glutamate 77, and aspartate 168.

This sequence belongs to the RNase HII family. It depends on Mn(2+) as a cofactor. The cofactor is Mg(2+).

Its subcellular location is the cytoplasm. It catalyses the reaction Endonucleolytic cleavage to 5'-phosphomonoester.. Functionally, endonuclease that specifically degrades the RNA of RNA-DNA hybrids. The protein is Ribonuclease HII of Streptococcus pneumoniae (strain ATCC 700669 / Spain 23F-1).